Consider the following 156-residue polypeptide: Small ribosomal subunit protein uS7 (156 aa).

This sequence belongs to the universal ribosomal protein uS7 family. As to quaternary structure, part of the 30S ribosomal subunit. Contacts proteins S9 and S11.

One of the primary rRNA binding proteins, it binds directly to 16S rRNA where it nucleates assembly of the head domain of the 30S subunit. Is located at the subunit interface close to the decoding center, probably blocks exit of the E-site tRNA. This chain is Small ribosomal subunit protein uS7, found in Arthrospira platensis (Spirulina platensis).